Here is a 68-residue protein sequence, read N- to C-terminus: Conotoxin ba14a (68 aa).

An N-terminal signal peptide occupies residues 1 to 20 (MKLSVMFIVALVLSLSMTDG). Positions 21-50 (LPRRAENGGRIFRQHSPDSMDPQTRQIKTR) are excised as a propeptide.

Post-translationally, contains 2 disulfide bonds. Expressed by the venom duct.

It is found in the secreted. In Conus bayani (Bayan's cone), this protein is Conotoxin ba14a.